Consider the following 82-residue polypeptide: Small ribosomal subunit protein bS18 (82 aa).

This sequence belongs to the bacterial ribosomal protein bS18 family. Part of the 30S ribosomal subunit. Forms a tight heterodimer with protein bS6.

Its function is as follows. Binds as a heterodimer with protein bS6 to the central domain of the 16S rRNA, where it helps stabilize the platform of the 30S subunit. This Bartonella bacilliformis (strain ATCC 35685 / KC583 / Herrer 020/F12,63) protein is Small ribosomal subunit protein bS18.